The chain runs to 266 residues: Undecaprenyl-diphosphatase (266 aa).

Transmembrane regions (helical) follow at residues 1-21, 39-59, 86-106, 117-137, 153-173, 190-210, 216-236, and 246-266; these read MDFL…FIPV, PGSS…FWYF, SIFI…LFVT, FSIA…DIST, FIGI…GATI, SFLL…ITSI, FPFL…LLAI, and NGLK…ILNL.

The protein belongs to the UppP family.

It is found in the cell inner membrane. It catalyses the reaction di-trans,octa-cis-undecaprenyl diphosphate + H2O = di-trans,octa-cis-undecaprenyl phosphate + phosphate + H(+). In terms of biological role, catalyzes the dephosphorylation of undecaprenyl diphosphate (UPP). Confers resistance to bacitracin. This is Undecaprenyl-diphosphatase from Prochlorococcus marinus (strain MIT 9515).